The primary structure comprises 74 residues: Imcroporin (74 aa).

The first 22 residues, 1 to 22, serve as a signal peptide directing secretion; the sequence is MKFQYLLAVFLIVLVVTDHCQA. Lysine 39 is modified (lysine amide; partial). A propeptide spanning residues 45–74 is cleaved from the precursor; that stretch reads QLEARFEPKQRNFRKRELDFEKLFANMPDY.

It belongs to the non-disulfide-bridged peptide (NDBP) superfamily. Short antimicrobial peptide (group 4) family. As to expression, expressed by the venom gland.

It localises to the secreted. The protein localises to the target cell membrane. Its function is as follows. Has potent antibacterial activity against Gram-positive bacteria M.luteus, B.thuringiensis, S.aureus and B.subtilis, but not Gram-negative bacteria. Shows a weak cytotoxicity effect against mammalian cell lines and relatively low hemolytic activity against human erythrocytes. The polypeptide is Imcroporin (Isometrus maculatus (Lesser brown scorpion)).